The following is a 123-amino-acid chain: MAITKEDILEAVGSLTVMELNDLVKAFEEKFGVSAAAVAVAGPAGAGAAAAEEKTEFDVVLASAGDQKVGVIKVVRAITGLGLKEAKDIVDGAPKTLKEGVSKAEAEDIQKQLEEAGAKVEIK.

Belongs to the bacterial ribosomal protein bL12 family. As to quaternary structure, homodimer. Part of the ribosomal stalk of the 50S ribosomal subunit. Forms a multimeric L10(L12)X complex, where L10 forms an elongated spine to which 2 to 4 L12 dimers bind in a sequential fashion. Binds GTP-bound translation factors.

Functionally, forms part of the ribosomal stalk which helps the ribosome interact with GTP-bound translation factors. Is thus essential for accurate translation. This Neisseria perflava protein is Large ribosomal subunit protein bL12.